A 493-amino-acid chain; its full sequence is Glutamyl-tRNA(Gln) amidotransferase subunit A (493 aa).

Catalysis depends on charge relay system residues lysine 79 and serine 159. Serine 183 (acyl-ester intermediate) is an active-site residue.

The protein belongs to the amidase family. GatA subfamily. In terms of assembly, heterotrimer of A, B and C subunits.

The enzyme catalyses L-glutamyl-tRNA(Gln) + L-glutamine + ATP + H2O = L-glutaminyl-tRNA(Gln) + L-glutamate + ADP + phosphate + H(+). Functionally, allows the formation of correctly charged Gln-tRNA(Gln) through the transamidation of misacylated Glu-tRNA(Gln) in organisms which lack glutaminyl-tRNA synthetase. The reaction takes place in the presence of glutamine and ATP through an activated gamma-phospho-Glu-tRNA(Gln). This Sinorhizobium fredii (strain NBRC 101917 / NGR234) protein is Glutamyl-tRNA(Gln) amidotransferase subunit A.